Here is a 238-residue protein sequence, read N- to C-terminus: Membrane protein 2 (238 aa).

This sequence belongs to the varicellovirus ORF2 protein family. Post-translationally, phosphorylated by host.

Its subcellular location is the host membrane. The polypeptide is Membrane protein 2 (Varicella-zoster virus (strain Dumas) (HHV-3)).